A 203-amino-acid polypeptide reads, in one-letter code: Proteasome subunit beta 2 (203 aa).

Positions 1 to 9 (MGEEVQIGA) are cleaved as a propeptide — removed in mature form; by autocatalysis. The Nucleophile role is filled by threonine 10.

The protein belongs to the peptidase T1B family. In terms of assembly, the 20S proteasome core is composed of 14 alpha and 14 beta subunits that assemble into four stacked heptameric rings, resulting in a barrel-shaped structure. The two inner rings, each composed of seven catalytic beta subunits, are sandwiched by two outer rings, each composed of seven alpha subunits. The catalytic chamber with the active sites is on the inside of the barrel. Has a gated structure, the ends of the cylinder being occluded by the N-termini of the alpha-subunits. Is capped at one or both ends by the proteasome regulatory ATPase, PAN.

It localises to the cytoplasm. It carries out the reaction Cleavage of peptide bonds with very broad specificity.. With respect to regulation, the formation of the proteasomal ATPase PAN-20S proteasome complex, via the docking of the C-termini of PAN into the intersubunit pockets in the alpha-rings, triggers opening of the gate for substrate entry. Interconversion between the open-gate and close-gate conformations leads to a dynamic regulation of the 20S proteasome proteolysis activity. Its function is as follows. Component of the proteasome core, a large protease complex with broad specificity involved in protein degradation. This chain is Proteasome subunit beta 2, found in Pyrobaculum aerophilum (strain ATCC 51768 / DSM 7523 / JCM 9630 / CIP 104966 / NBRC 100827 / IM2).